We begin with the raw amino-acid sequence, 54 residues long: U7-myrmicitoxin-Tb1a (54 aa).

An N-terminal signal peptide occupies residues M1–A26. Positions D27–A36 are excised as a propeptide. The cysteines at positions 40 and 49 are disulfide-linked.

As to expression, expressed by the venom gland.

Its subcellular location is the secreted. In terms of biological role, venom protein with unknown function. Does not induce paralysis when a high dose is administered by intrathoracic injection into the blowfly Lucilia caesar. The protein is U7-myrmicitoxin-Tb1a of Tetramorium bicarinatum (Tramp ant).